The sequence spans 478 residues: Sulfate adenylyltransferase subunit 1 (478 aa).

The tr-type G domain occupies 28 to 244 (KTMLRFLTCG…LESVDVVNAS (217 aa)). Residues 37-44 (GSVDDGKS) are G1. 37–44 (GSVDDGKS) is a GTP binding site. The tract at residues 95–99 (GITID) is G2. Residues 116–119 (DTPG) form a G3 region. GTP contacts are provided by residues 116 to 120 (DTPGH) and 171 to 174 (NKMD). Residues 171–174 (NKMD) form a G4 region. A G5 region spans residues 209–211 (SAL).

This sequence belongs to the TRAFAC class translation factor GTPase superfamily. Classic translation factor GTPase family. CysN/NodQ subfamily. Heterodimer composed of CysD, the smaller subunit, and CysN.

It carries out the reaction sulfate + ATP + H(+) = adenosine 5'-phosphosulfate + diphosphate. Its pathway is sulfur metabolism; hydrogen sulfide biosynthesis; sulfite from sulfate: step 1/3. Its function is as follows. With CysD forms the ATP sulfurylase (ATPS) that catalyzes the adenylation of sulfate producing adenosine 5'-phosphosulfate (APS) and diphosphate, the first enzymatic step in sulfur assimilation pathway. APS synthesis involves the formation of a high-energy phosphoric-sulfuric acid anhydride bond driven by GTP hydrolysis by CysN coupled to ATP hydrolysis by CysD. In Yersinia enterocolitica serotype O:8 / biotype 1B (strain NCTC 13174 / 8081), this protein is Sulfate adenylyltransferase subunit 1.